Reading from the N-terminus, the 427-residue chain is MALSGNCSRYYPRDQGAAVPNSFPEVIELNVGGQVYFTRHSTLISIPHSLLWKMFSPKRDTANDLAKDSKGRFFIDRDGFLFRYILDYLRDRQVVLPDHFPERGRLKREAEYFQLPDLVKLLAPEDVKQSPDEFCHSDFEDASQGSDTRICPPSSLLPHDRKWGFITVGYRGSCTLGREGQADAKFRRVPRILVCGRISLAKEVFGETLNESRDPDRAPERYTSRFYLKFKHLERAFDMLSECGFHMVACNSSVTASFVNQYTEDKIWSSYTEYVFYREPSRWSSSHCDCCCKNGKGDKGESGTSCNDLSTSSCDSQSEASSPQETVICGPVTRQSNIQTLDRPIKKGPVQLIQQSEMRRKSDLLRTLTSGSRESNISSKKKAAKEKLSIEEELEKCIQDFLKIKIPDRFPERKHPWQSELLRKYHL.

A BTB domain is found at 25-98 (EVIELNVGGQ…LRDRQVVLPD (74 aa)). Position 112 is a phosphotyrosine (Tyr-112). Ser-130, Ser-137, Ser-143, and Ser-146 each carry phosphoserine.

Homopentamer; forms an open pentamer. In contrast to other BTB domain-containing proteins, does not interact with CUL3. Interacts as a tetramer with GABBR1 and GABBR2. In terms of tissue distribution, expressed in the brain, mainly in the hippocampus.

The protein resides in the presynaptic cell membrane. It localises to the postsynaptic cell membrane. Functionally, auxiliary subunit of GABA-B receptors that determine the pharmacology and kinetics of the receptor response. Increases agonist potency and markedly alter the G-protein signaling of the receptors by accelerating onset and promoting desensitization. The sequence is that of BTB/POZ domain-containing protein KCTD16 (Kctd16) from Mus musculus (Mouse).